A 378-amino-acid chain; its full sequence is tRNA-specific 2-thiouridylase MnmA (378 aa).

ATP is bound by residues 7 to 14 (GLSGGVDS) and methionine 33. The tract at residues 102-104 (NPD) is interaction with target base in tRNA. Cysteine 107 acts as the Nucleophile in catalysis. The cysteines at positions 107 and 209 are disulfide-linked. An ATP-binding site is contributed by glycine 132. Residues 159 to 161 (KDQ) form an interaction with tRNA region. The active-site Cysteine persulfide intermediate is the cysteine 209. Positions 316–317 (RY) are interaction with tRNA.

The protein belongs to the MnmA/TRMU family.

It is found in the cytoplasm. It carries out the reaction S-sulfanyl-L-cysteinyl-[protein] + uridine(34) in tRNA + AH2 + ATP = 2-thiouridine(34) in tRNA + L-cysteinyl-[protein] + A + AMP + diphosphate + H(+). Its function is as follows. Catalyzes the 2-thiolation of uridine at the wobble position (U34) of tRNA, leading to the formation of s(2)U34. The polypeptide is tRNA-specific 2-thiouridylase MnmA (Onion yellows phytoplasma (strain OY-M)).